Here is a 346-residue protein sequence, read N- to C-terminus: Nicotinate-nucleotide--dimethylbenzimidazole phosphoribosyltransferase (346 aa).

The Proton acceptor role is filled by Glu313.

This sequence belongs to the CobT family.

It carries out the reaction 5,6-dimethylbenzimidazole + nicotinate beta-D-ribonucleotide = alpha-ribazole 5'-phosphate + nicotinate + H(+). Its pathway is nucleoside biosynthesis; alpha-ribazole biosynthesis; alpha-ribazole from 5,6-dimethylbenzimidazole: step 1/2. Its function is as follows. Catalyzes the synthesis of alpha-ribazole-5'-phosphate from nicotinate mononucleotide (NAMN) and 5,6-dimethylbenzimidazole (DMB). This Parabacteroides distasonis (strain ATCC 8503 / DSM 20701 / CIP 104284 / JCM 5825 / NCTC 11152) protein is Nicotinate-nucleotide--dimethylbenzimidazole phosphoribosyltransferase.